A 493-amino-acid chain; its full sequence is Cytochrome P450 2E1 (493 aa).

298 to 303 (FAGTET) contributes to the substrate binding site. Cys-437 provides a ligand contact to heme.

This sequence belongs to the cytochrome P450 family. Interacts with chaperones HSP70 and HSP90; this interaction is required for initial targeting to mitochondria. It depends on heme as a cofactor.

The protein resides in the endoplasmic reticulum membrane. The protein localises to the microsome membrane. It localises to the mitochondrion inner membrane. The enzyme catalyses an organic molecule + reduced [NADPH--hemoprotein reductase] + O2 = an alcohol + oxidized [NADPH--hemoprotein reductase] + H2O + H(+). The catalysed reaction is (5Z,8Z,11Z)-eicosatrienoate + reduced [NADPH--hemoprotein reductase] + O2 = 19-hydroxy-(5Z,8Z,11Z)-eicosatrienoate + oxidized [NADPH--hemoprotein reductase] + H2O + H(+). It catalyses the reaction (5Z,8Z,11Z,14Z,17Z)-eicosapentaenoate + reduced [NADPH--hemoprotein reductase] + O2 = 19-hydroxy-(5Z,8Z,11Z,14Z,17Z)-eicosapentaenoate + oxidized [NADPH--hemoprotein reductase] + H2O + H(+). It carries out the reaction (4Z,7Z,10Z,13Z,16Z,19Z)-docosahexaenoate + reduced [NADPH--hemoprotein reductase] + O2 = 21-hydroxy-(4Z,7Z,10Z,13Z,16Z,19Z)-docosahexaenoate + oxidized [NADPH--hemoprotein reductase] + H2O + H(+). The enzyme catalyses dodecanoate + reduced [NADPH--hemoprotein reductase] + O2 = 11-hydroxydodecanoate + oxidized [NADPH--hemoprotein reductase] + H2O + H(+). The catalysed reaction is tetradecanoate + reduced [NADPH--hemoprotein reductase] + O2 = 13-hydroxytetradecanoate + oxidized [NADPH--hemoprotein reductase] + H2O + H(+). It catalyses the reaction 4-nitrophenol + NADPH + O2 + H(+) = 4-nitrocatechol + NADP(+) + H2O. It functions in the pathway lipid metabolism; fatty acid metabolism. With respect to regulation, the omega-1 hydroxylase activity is stimulated by cytochrome b5. Functionally, a cytochrome P450 monooxygenase involved in the metabolism of fatty acids. Mechanistically, uses molecular oxygen inserting one oxygen atom into a substrate, and reducing the second into a water molecule, with two electrons provided by NADPH via cytochrome P450 reductase (NADPH--hemoprotein reductase). Catalyzes the hydroxylation of carbon-hydrogen bonds. Hydroxylates fatty acids specifically at the omega-1 position displaying the highest catalytic activity for saturated fatty acids. May be involved in the oxidative metabolism of xenobiotics. In Macaca mulatta (Rhesus macaque), this protein is Cytochrome P450 2E1 (CYP2E1).